The sequence spans 268 residues: CCAAT/enhancer-binding protein delta (268 aa).

Disordered regions lie at residues 1 to 50, 98 to 132, and 152 to 223; these read MSAA…STTP, LELL…DAPG, and AAQP…QQKL. The residue at position 2 (S2) is an N-acetylserine. K120 participates in a covalent cross-link: Glycyl lysine isopeptide (Lys-Gly) (interchain with G-Cter in SUMO). Positions 155–173 are enriched in pro residues; it reads PTPPTSPEPPRGSPGPSLA. Basic and acidic residues predominate over residues 177–201; the sequence is VREKGAGKRGPDRGSPEYRQRRERN. In terms of domain architecture, bZIP spans 191-254; sequence SPEYRQRRER…ASLRQFFKEL (64 aa). The segment at 195 to 222 is basic motif; the sequence is RQRRERNNIAVRKSRDKAKRRNQEMQQK. Positions 226 to 254 are leucine-zipper; sequence LSAENEKLHQRVEQLTRDLASLRQFFKEL.

It belongs to the bZIP family. C/EBP subfamily. As to quaternary structure, binds DNA as a homodimer and as a heterodimer. Can form stable heterodimers with CEBPA, CEBPB and CEBPE. Directly interacts with SPI1/PU.1; this interaction does not affect DNA-binding properties of each partner. Interacts with PRDM16. Ubiquitously expressed.

It is found in the nucleus. Its function is as follows. Transcription activator that recognizes two different DNA motifs: the CCAAT homology common to many promoters and the enhanced core homology common to many enhancers. Important transcription factor regulating the expression of genes involved in immune and inflammatory responses. Transcriptional activator that enhances IL6 transcription alone and as heterodimer with CEBPB. This is CCAAT/enhancer-binding protein delta (Cebpd) from Rattus norvegicus (Rat).